The primary structure comprises 109 residues: uncharacterized protein (109 aa).

This sequence to A.fulgidus AF1885.

This is an uncharacterized protein from Methanocaldococcus jannaschii (strain ATCC 43067 / DSM 2661 / JAL-1 / JCM 10045 / NBRC 100440) (Methanococcus jannaschii).